The sequence spans 149 residues: Transcriptional repressor NrdR (149 aa).

A zinc finger spans residues 3 to 34 (CPFCAAVDTKVIDSRLVGDGSQVRRRRQCLVC). The ATP-cone domain maps to 49 to 139 (PRVIKSDEVR…VYRSFEDIRE (91 aa)).

Belongs to the NrdR family. The cofactor is Zn(2+).

Its function is as follows. Negatively regulates transcription of bacterial ribonucleotide reductase nrd genes and operons by binding to NrdR-boxes. This is Transcriptional repressor NrdR from Serratia proteamaculans (strain 568).